The following is a 324-amino-acid chain: Phospho-N-acetylmuramoyl-pentapeptide-transferase (324 aa).

10 helical membrane passes run 9–29 (TFAV…PFLV), 54–74 (MGAV…SFIG), 77–97 (VSAA…LGFL), 117–137 (FLGQ…SDFA), 147–167 (IEVD…VGFS), 176–196 (LDGL…VIAF), 201–221 (MDVA…LLFN), 227–247 (IFMG…VSIL), 253–273 (LLLL…LQVF), and 304–324 (VLTF…VVIF).

The protein belongs to the glycosyltransferase 4 family. MraY subfamily. Mg(2+) is required as a cofactor.

The protein resides in the cell membrane. The catalysed reaction is UDP-N-acetyl-alpha-D-muramoyl-L-alanyl-gamma-D-glutamyl-meso-2,6-diaminopimeloyl-D-alanyl-D-alanine + di-trans,octa-cis-undecaprenyl phosphate = di-trans,octa-cis-undecaprenyl diphospho-N-acetyl-alpha-D-muramoyl-L-alanyl-D-glutamyl-meso-2,6-diaminopimeloyl-D-alanyl-D-alanine + UMP. It participates in cell wall biogenesis; peptidoglycan biosynthesis. Its function is as follows. Catalyzes the initial step of the lipid cycle reactions in the biosynthesis of the cell wall peptidoglycan: transfers peptidoglycan precursor phospho-MurNAc-pentapeptide from UDP-MurNAc-pentapeptide onto the lipid carrier undecaprenyl phosphate, yielding undecaprenyl-pyrophosphoryl-MurNAc-pentapeptide, known as lipid I. The protein is Phospho-N-acetylmuramoyl-pentapeptide-transferase of Listeria welshimeri serovar 6b (strain ATCC 35897 / DSM 20650 / CCUG 15529 / CIP 8149 / NCTC 11857 / SLCC 5334 / V8).